Reading from the N-terminus, the 449-residue chain is MGKEKVHMNLVVVGHVDAGKSTATGHLIYKCGGIDKRTIEKFEKEAADIGKASFKYAWVLDKLKAERERGITIDIALWKFESPKSVFTIIDAPGHRDFIKNMITGTSQADAAILIIASAQGEFEAGISKDGQTREHALLAFTLGVKQMVVCCNKMDDKTVNYGQERYDEIVKEVSAYIKKVGYNVEKVRFVPISGWQGDNMIEKSEKMPWYKGPTLLEALDMLEPPVRPSDKPLRLPLQTCTKIGGIGTVPVGRVETGVMKPGDVVTFAPANVTTEVKSIEMHHEQLAEATPGDNVGFNVKNVSVKDIRRGNVCGNTKNDPPKEAADFTAQVIILNHPGQIGNGYAPVLDCHTSHIACKFAEIESKIDRRSGKELEKAPKSIKSGDAAIVRMVPQKPMCVEVFNDYAPLGRFAVRDMRQTVAVGIIKAVTKKDGSGGKVTKAAVKASKK.

One can recognise a tr-type G domain in the interval 5–230 (KVHMNLVVVG…DMLEPPVRPS (226 aa)). Residues 14–21 (GHVDAGKS) are G1. 14–21 (GHVDAGKS) lines the GTP pocket. The segment at 70–74 (GITID) is G2. The interval 91–94 (DAPG) is G3. Residues 91–95 (DAPGH) and 153–156 (NKMD) contribute to the GTP site. A G4 region spans residues 153 to 156 (NKMD). Positions 194–196 (SGW) are G5. E362 bears the 5-glutamyl glycerylphosphorylethanolamine mark.

Belongs to the TRAFAC class translation factor GTPase superfamily. Classic translation factor GTPase family. EF-Tu/EF-1A subfamily. Post-translationally, phosphatidylethanolamine (PE) is a direct precursor of the ethanolamine-phosphoglycerol (EPG) moiety.

It localises to the cytoplasm. Its function is as follows. This protein promotes the GTP-dependent binding of aminoacyl-tRNA to the A-site of ribosomes during protein biosynthesis. In Trypanosoma brucei brucei, this protein is Elongation factor 1-alpha (TEF1).